A 520-amino-acid polypeptide reads, in one-letter code: 4-hydroxyphenylacetate 3-monooxygenase oxygenase component (520 aa).

FAD contacts are provided by residues 155-157 (HAI) and Thr196.

Belongs to the FADH(2)-utilizing monooxygenase family. As to quaternary structure, homodimer. HPA 3-hydroxylase consists of a reductase component HpaC and an oxygenase component HpaB. Some form of interactions between the reductase and the oxygenase facilitate the transfer of FADH(-) to the oxygenase in P.aeruginosa, although interactions are not required in other species.

The catalysed reaction is 4-hydroxyphenylacetate + FADH2 + O2 = 3,4-dihydroxyphenylacetate + FAD + H2O + H(+). Its pathway is aromatic compound metabolism; 4-hydroxyphenylacetate degradation; pyruvate and succinate semialdehyde from 4-hydroxyphenylacetate: step 1/7. Functionally, oxygenase component of the 4-hydroxyphenylacetate (HPA) 3-hydroxylase. Catalyzes the hydroxylation of 4-hydroxyphenylacetate to form 3,4-dihydroxyphenylacetate, using FADH(-) provided by the reductase component HpaC to activate oxygen. To a lesser extent, can also use reduced FMN. In vitro, has hydroxylation activity toward tyrosol and various cinnamic acid derivatives, catalyzing the hydroxylation of p-coumaric acid, caffeic acid, ferulic acid, and coniferaldehyde. In Pseudomonas aeruginosa (strain ATCC 15692 / DSM 22644 / CIP 104116 / JCM 14847 / LMG 12228 / 1C / PRS 101 / PAO1), this protein is 4-hydroxyphenylacetate 3-monooxygenase oxygenase component.